The sequence spans 264 residues: uncharacterized protein (264 aa).

The tract at residues 235-264 is disordered; it reads ESSDEEDNDDDIINNDTNNDINNDDIEIKT. Positions 237–247 are enriched in acidic residues; the sequence is SDEEDNDDDII.

This is an uncharacterized protein from Acanthamoeba polyphaga mimivirus (APMV).